Here is a 374-residue protein sequence, read N- to C-terminus: Glutamate 5-kinase (374 aa).

An ATP-binding site is contributed by Lys-16. Substrate contacts are provided by Ser-56, Asp-143, and Asn-155. 175 to 176 (TD) lines the ATP pocket. The 79-residue stretch at 282–360 (KGCFVVDEGA…TRIEEILGYV (79 aa)) folds into the PUA domain.

The protein belongs to the glutamate 5-kinase family.

Its subcellular location is the cytoplasm. It carries out the reaction L-glutamate + ATP = L-glutamyl 5-phosphate + ADP. It participates in amino-acid biosynthesis; L-proline biosynthesis; L-glutamate 5-semialdehyde from L-glutamate: step 1/2. In terms of biological role, catalyzes the transfer of a phosphate group to glutamate to form L-glutamate 5-phosphate. In Methylococcus capsulatus (strain ATCC 33009 / NCIMB 11132 / Bath), this protein is Glutamate 5-kinase.